The following is a 220-amino-acid chain: Thiopurine S-methyltransferase (220 aa).

S-adenosyl-L-methionine contacts are provided by W10, L45, E66, and R123.

It belongs to the class I-like SAM-binding methyltransferase superfamily. TPMT family.

It is found in the cytoplasm. It catalyses the reaction S-adenosyl-L-methionine + a thiopurine = S-adenosyl-L-homocysteine + a thiopurine S-methylether.. This chain is Thiopurine S-methyltransferase, found in Pseudomonas syringae pv. tomato (strain ATCC BAA-871 / DC3000).